An 89-amino-acid chain; its full sequence is Small ribosomal subunit protein uS15 (89 aa).

Belongs to the universal ribosomal protein uS15 family. In terms of assembly, part of the 30S ribosomal subunit. Forms a bridge to the 50S subunit in the 70S ribosome, contacting the 23S rRNA.

Functionally, one of the primary rRNA binding proteins, it binds directly to 16S rRNA where it helps nucleate assembly of the platform of the 30S subunit by binding and bridging several RNA helices of the 16S rRNA. In terms of biological role, forms an intersubunit bridge (bridge B4) with the 23S rRNA of the 50S subunit in the ribosome. The chain is Small ribosomal subunit protein uS15 from Nitrosospira multiformis (strain ATCC 25196 / NCIMB 11849 / C 71).